The sequence spans 33 residues: GVPCSCRGKSGTYWSAGKCPGEHYTTYCNNLIG.

A disulfide bridge connects residues Cys6 and Cys28.

Its subcellular location is the secreted. It is found in the nematocyst. The sequence is that of Toxin Bcg III 25.52 from Bunodosoma cangicum (Sea anemone).